A 498-amino-acid chain; its full sequence is NADH-quinone oxidoreductase subunit N (498 aa).

14 consecutive transmembrane segments (helical) span residues 10–30, 44–64, 68–88, 109–129, 130–150, 164–184, 207–227, 239–259, 273–293, 301–321, 328–348, 377–397, 412–434, and 458–478; these read LMPL…MLLI, VVGL…GKFV, VMGM…ILVA, ELYL…ASSH, YASF…LLAY, YLVL…YIYA, VLLG…LAPF, PAPM…GLFV, LVTV…LLAV, ILGY…ISMT, VTVY…AVAL, ATLT…GFIG, FLAA…VMVV, and LMVL…DPMI.

This sequence belongs to the complex I subunit 2 family. As to quaternary structure, NDH-1 is composed of 14 different subunits. Subunits NuoA, H, J, K, L, M, N constitute the membrane sector of the complex.

The protein localises to the cell inner membrane. The enzyme catalyses a quinone + NADH + 5 H(+)(in) = a quinol + NAD(+) + 4 H(+)(out). In terms of biological role, NDH-1 shuttles electrons from NADH, via FMN and iron-sulfur (Fe-S) centers, to quinones in the respiratory chain. The immediate electron acceptor for the enzyme in this species is believed to be ubiquinone. Couples the redox reaction to proton translocation (for every two electrons transferred, four hydrogen ions are translocated across the cytoplasmic membrane), and thus conserves the redox energy in a proton gradient. The protein is NADH-quinone oxidoreductase subunit N of Acinetobacter baumannii (strain AB0057).